The chain runs to 658 residues: Putative endo-beta-N-acetylglucosaminidase (658 aa).

A signal peptide spans 1-23 (MKKVRFIFLALLFFLASPEGAMA). Cell wall-binding repeat units follow at residues 42–63 (ANEWVFDTHYQSWFYIKADANY), 65–84 (ENEWLKQGDDYFYLKSGGYM), 86–105 (KSEWVEDKGAFYYLDQDGKM), 124–145 (IEDWVYDSQYDAWFYIKADGQH), 147–166 (EKEWLQIKGKDYYFKSGGYL), 185–206 (QQGWLFDKQYQSWFYIKENGNY), 208–227 (DKEWIFENGHYYYLKSGGYM), 229–248 (ANEWIWDKESWFYLKFDGKM), 250–271 (EKEWVYDSHSQAWYYFKSGGYM), 273–292 (ANEWIWDKESWFYLKSDGKI), 294–315 (EKEWVYDSHSQAWYYFKSGGYM), 317–336 (ANEWIWDKESWFYLKSDGKI), and 338–359 (EKEWVYDSHSQAWYYFKSGGYM).

The protein belongs to the glycosyl hydrolase 73 family.

The protein localises to the secreted. It catalyses the reaction an N(4)-(oligosaccharide-(1-&gt;3)-[oligosaccharide-(1-&gt;6)]-beta-D-Man-(1-&gt;4)-beta-D-GlcNAc-(1-&gt;4)-alpha-D-GlcNAc)-L-asparaginyl-[protein] + H2O = an oligosaccharide-(1-&gt;3)-[oligosaccharide-(1-&gt;6)]-beta-D-Man-(1-&gt;4)-D-GlcNAc + N(4)-(N-acetyl-beta-D-glucosaminyl)-L-asparaginyl-[protein]. Functionally, plays an important role in cell wall degradation and cell separation. In Streptococcus pneumoniae serotype 4 (strain ATCC BAA-334 / TIGR4), this protein is Putative endo-beta-N-acetylglucosaminidase (lytB).